The following is a 228-amino-acid chain: RING1 and YY1-binding protein (228 aa).

Disordered regions lie at residues 1–21 (MTMG…PAAD), 65–156 (QVAQ…RSTA), and 172–228 (DFKE…DESF). The RanBP2-type zinc finger occupies 21–50 (DEGFWDCSVCTFRNSAEAFKCSICDVRKGT). Positions 76 to 98 (PKKEKKEKVEKQDKEKPEKDKEI) are enriched in basic and acidic residues. Residue Lys-77 forms a Glycyl lysine isopeptide (Lys-Gly) (interchain with G-Cter in SUMO2) linkage. The residue at position 99 (Ser-99) is a Phosphoserine. A compositionally biased stretch (basic and acidic residues) spans 113 to 122 (PKSDILKDPP). A phosphoserine mark is found at Ser-123, Ser-127, and Ser-130. Residues 124–143 (EANSIQSANATTKTSETNHT) show a composition bias toward polar residues. Residues 143 to 226 (TSRPRLKNVD…KGDMSAVNDE (84 aa)) form an interaction with GABPB1 and FANK1 region. Over residues 179–204 (SSSTSSSTVTSSAGSEQQNQSSSGSE) the composition is skewed to low complexity. Residue Ser-227 is modified to Phosphoserine.

Monomer. Component of repressive BCOR complex containing Polycomb group subcomplex at least composed of BCOR, PCGF1, RING1 and RNF2/RING2. Component of PCR1-like complexes. Interacts with PCGF1. Part of a PCR1-like complex that contains AUTS2, PCGF5, RNF2, CSNK2B and RYBP. Interacts with RNF2; the interaction is direct. Interacts with CBX2, YAF2, RING1 and RNF2. Interacts with ubiquitin and ubiquitinated proteins. Interacts with ubiquitinated histone H2A. Interacts with apoptin, DEDD, FADD, CASP8, CASP10, YY1 and GABPB1. Together with GABPB1 and YY1, it forms a ternary complex, probably being the bridge factor between these two transcription factors. Interacts with MDM2, and thereby inhibits ubiquitination of TP53. Identified in a ternary complex containing MDM2, TP53 and RYBP. Interacts with FANK1; may prevent the ubiquitin-mediated proteasomal degradation of FANK1. Interacts with IFT57. In terms of processing, monoubiquitinated. In terms of tissue distribution, down-regulated in breast cancer tissues and in several breast cancer cell lines (at protein level). Widely expressed with highest levels in lymphoid tissues and placenta.

Its subcellular location is the nucleus. It localises to the cytoplasm. The protein localises to the nucleoplasm. Functionally, component of a Polycomb group (PcG) multiprotein PRC1-like complex, a complex class required to maintain the transcriptionally repressive state of many genes, including Hox genes, throughout development. PcG PRC1-like complex acts via chromatin remodeling and modification of histones; it mediates monoubiquitination of histone H2A 'Lys-119', rendering chromatin heritably changed in its expressibility. Component of a PRC1-like complex that mediates monoubiquitination of histone H2A 'Lys-119' on the X chromosome and is required for normal silencing of one copy of the X chromosome in XX females. May stimulate ubiquitination of histone H2A 'Lys-119' by recruiting the complex to target sites. Inhibits ubiquitination and subsequent degradation of TP53, and thereby plays a role in regulating transcription of TP53 target genes. May also regulate the ubiquitin-mediated proteasomal degradation of other proteins like FANK1 to regulate apoptosis. May be implicated in the regulation of the transcription as a repressor of the transcriptional activity of E4TF1. May bind to DNA. May play a role in the repression of tumor growth and metastasis in breast cancer by down-regulating SRRM3. The polypeptide is RING1 and YY1-binding protein (RYBP) (Homo sapiens (Human)).